A 450-amino-acid chain; its full sequence is V-type proton ATPase subunit H (450 aa).

This sequence belongs to the V-ATPase H subunit family. As to quaternary structure, V-ATPase is a heteromultimeric enzyme composed of a peripheral catalytic V1 complex (components A to H) attached to an integral membrane V0 proton pore complex (components: a, c, c', c'', d, e, f and VOA1).

The protein localises to the vacuole membrane. Subunit of the V1 complex of vacuolar(H+)-ATPase (V-ATPase), a multisubunit enzyme composed of a peripheral complex (V1) that hydrolyzes ATP and a membrane integral complex (V0) that translocates protons. V-ATPase is responsible for acidifying and maintaining the pH of intracellular compartments. This subunit is essential for activity, but not assembly, of the enzyme complex. This subunit is also required for silencing the ATPase activity of V-ATPase when V1 is detached from V0. The protein is V-type proton ATPase subunit H (vma13) of Schizosaccharomyces pombe (strain 972 / ATCC 24843) (Fission yeast).